The sequence spans 108 residues: Protein Asterix (108 aa).

The segment at 1–29 is disordered; that stretch reads MNMTVDPRRKEKINRYKAPKNQGQSGGAN. Residues 80–96 form a helical membrane-spanning segment; the sequence is VLSSFMLSVSAVVMSYL.

This sequence belongs to the Asterix family.

It localises to the membrane. The protein is Protein Asterix of Drosophila melanogaster (Fruit fly).